Consider the following 515-residue polypeptide: 1-pyrroline-5-carboxylate dehydrogenase (515 aa).

Catalysis depends on residues glutamate 286 and cysteine 320.

It belongs to the aldehyde dehydrogenase family. RocA subfamily.

It carries out the reaction L-glutamate 5-semialdehyde + NAD(+) + H2O = L-glutamate + NADH + 2 H(+). It participates in amino-acid degradation; L-proline degradation into L-glutamate; L-glutamate from L-proline: step 2/2. The chain is 1-pyrroline-5-carboxylate dehydrogenase from Bacillus cereus (strain ATCC 10987 / NRS 248).